Consider the following 510-residue polypeptide: Ent-sandaracopimaradiene 3-hydroxylase (510 aa).

Residues M4–A24 traverse the membrane as a helical segment. C454 is a binding site for heme.

Belongs to the cytochrome P450 family. As to quaternary structure, interacts with the rice dwarf virus (RDV) P2 protein. The cofactor is heme. Expressed in leaf blades and sheaths, stems and panicles.

The protein localises to the membrane. It carries out the reaction ent-sandaracopimara-8(14),15-diene + reduced [NADPH--hemoprotein reductase] + O2 = ent-sandaracopimaradien-3beta-ol + oxidized [NADPH--hemoprotein reductase] + H2O + H(+). The enzyme catalyses 9beta-pimara-7,15-diene + reduced [NADPH--hemoprotein reductase] + O2 = 9beta-pimara-7,15-diene-3beta-ol + oxidized [NADPH--hemoprotein reductase] + H2O + H(+). Its function is as follows. Catalyzes the hydroxylation of ent-sandaracopimaradiene at the C3alpha position to produce ent-3beta-hydroxy-sandaracopimaradiene, an intermediates for the biosynthesis of oryzalexin D and oryzalexin E phytoalexins. Catalyzes the hydroxylation of ent-cassadiene at the C3alpha position to produce 3alpha-hydroxy-ent-cassadiene, which may be an intermediate for the biosynthesis of phytocassane phytoalexins. Catalyzes the hydroxylation of syn-pimaradiene (9-beta-pimara-7,15-diene) at the C3beta position to produce 3-beta-syn-pimaradiene. Can hydroxylate ent-kaurene in vitro, but the product is not ent-kauren-19-ol as expected for ent-kaurene oxidase activity. This chain is Ent-sandaracopimaradiene 3-hydroxylase, found in Oryza sativa subsp. japonica (Rice).